The following is a 313-amino-acid chain: 3'-5' exoribonuclease YhaM (313 aa).

In terms of domain architecture, HD spans 163 to 279; that stretch reads HVVSMLRLAK…LHQIDLMDAS (117 aa).

This sequence belongs to the YhaM family.

Its function is as follows. Shows a 3'-5' exoribonuclease activity. The chain is 3'-5' exoribonuclease YhaM from Listeria monocytogenes serotype 4b (strain CLIP80459).